Reading from the N-terminus, the 119-residue chain is Ribonuclease P protein component (119 aa).

It belongs to the RnpA family. Consists of a catalytic RNA component (M1 or rnpB) and a protein subunit.

The catalysed reaction is Endonucleolytic cleavage of RNA, removing 5'-extranucleotides from tRNA precursor.. RNaseP catalyzes the removal of the 5'-leader sequence from pre-tRNA to produce the mature 5'-terminus. It can also cleave other RNA substrates such as 4.5S RNA. The protein component plays an auxiliary but essential role in vivo by binding to the 5'-leader sequence and broadening the substrate specificity of the ribozyme. The chain is Ribonuclease P protein component from Nitrosococcus oceani (strain ATCC 19707 / BCRC 17464 / JCM 30415 / NCIMB 11848 / C-107).